The primary structure comprises 282 residues: D-alanine aminotransferase (282 aa).

Position 32 (Y32) interacts with substrate. Residue R51 coordinates pyridoxal 5'-phosphate. Residues R99 and H101 each contribute to the substrate site. K146 serves as the catalytic Proton acceptor. N6-(pyridoxal phosphate)lysine is present on K146. E178 provides a ligand contact to pyridoxal 5'-phosphate.

Belongs to the class-IV pyridoxal-phosphate-dependent aminotransferase family. Homodimer. The cofactor is pyridoxal 5'-phosphate.

The catalysed reaction is D-alanine + 2-oxoglutarate = D-glutamate + pyruvate. In terms of biological role, acts on the D-isomers of alanine, leucine, aspartate, glutamate, aminobutyrate, norvaline and asparagine. The enzyme transfers an amino group from a substrate D-amino acid to the pyridoxal phosphate cofactor to form pyridoxamine and an alpha-keto acid in the first half-reaction. The second half-reaction is the reverse of the first, transferring the amino group from the pyridoxamine to a second alpha-keto acid to form the product D-amino acid via a ping-pong mechanism. This is an important process in the formation of D-alanine and D-glutamate, which are essential bacterial cell wall components. The sequence is that of D-alanine aminotransferase (dat) from Staphylococcus aureus (strain N315).